The chain runs to 678 residues: Beta-catenin-like protein hmp-2 (678 aa).

ARM repeat units follow at residues 153–192 (RGGP…NLLM), 280–319 (PSNK…RNLS), 320–359 (DSAT…NLTC), 362–403 (TRNK…HCTA), and 409–448 (EEAQ…NSAL).

This sequence belongs to the beta-catenin family. As to quaternary structure, component of a core catenin-cadherin complex consisting of hmr-1, hmp-1 and hmp-2; the complex localizes to adherens junctions. Interacts with hmr-1; the interaction is direct. May interact with hmp-1. Interacts with frk-1. Epidermal cells.

Its subcellular location is the cell junction. It is found in the adherens junction. Its function is as follows. Required for cell migration during body enclosure and cell shape changes during body elongation. Plays a role in recruitment of the cadherin protein hmr-1 to adherens junctions. The sequence is that of Beta-catenin-like protein hmp-2 (hmp-2) from Caenorhabditis elegans.